Consider the following 451-residue polypeptide: BSD domain-containing protein 1 (451 aa).

A BSD domain is found at 146–198 (WLSRFSLEEKKGEIAELLATSPSIRALYTKMVPAAVSHSEFWQRYFYKVHRLE). Disordered stretches follow at residues 252 to 296 (SAAL…SLVT) and 309 to 424 (LQTG…DLDM). A compositionally biased stretch (low complexity) spans 275 to 295 (PPELAPAEGSPSESSESVSLV). The span at 309 to 320 (LQTGVQPSGNRD) shows a compositional bias: polar residues. Over residues 365-388 (KEVESKAQGRTETLKEEGPTDLRV) the composition is skewed to basic and acidic residues. The segment covering 392-411 (NSDSGKSTPSNNGKKGSSTD) has biased composition (polar residues). Over residues 412-424 (ISEDWEKDFDLDM) the composition is skewed to acidic residues.

In Gallus gallus (Chicken), this protein is BSD domain-containing protein 1 (BSDC1).